Reading from the N-terminus, the 183-residue chain is Glutamyl-tRNA(Gln) amidotransferase subunit F, mitochondrial (183 aa).

The transit peptide at 1–23 directs the protein to the mitochondrion; that stretch reads MSRMLNQIPRLITRSFRTSSVGY.

It belongs to the GatF family. As to quaternary structure, subunit of the heterotrimeric GatFAB amidotransferase (AdT) complex, composed of A, B and F subunits.

The protein localises to the mitochondrion inner membrane. The catalysed reaction is L-glutamyl-tRNA(Gln) + L-glutamine + ATP + H2O = L-glutaminyl-tRNA(Gln) + L-glutamate + ADP + phosphate + H(+). Its function is as follows. Allows the formation of correctly charged Gln-tRNA(Gln) through the transamidation of misacylated Glu-tRNA(Gln) in the mitochondria. The reaction takes place in the presence of glutamine and ATP through an activated gamma-phospho-Glu-tRNA(Gln). Required for proper protein synthesis within the mitochondrion. The sequence is that of Glutamyl-tRNA(Gln) amidotransferase subunit F, mitochondrial from Debaryomyces hansenii (strain ATCC 36239 / CBS 767 / BCRC 21394 / JCM 1990 / NBRC 0083 / IGC 2968) (Yeast).